A 466-amino-acid polypeptide reads, in one-letter code: Major capsid protein (466 aa).

The protein belongs to the NCLDV major capsid protein family. As to quaternary structure, homotrimer.

The protein resides in the virion. Major capsid protein that self assembles to form an icosahedral capsid. Represents around 50% of the total virion protein mass. The polypeptide is Major capsid protein (MCP) (Invertebrate iridescent virus 3 (IIV-3)).